A 450-amino-acid polypeptide reads, in one-letter code: Tubulin alpha-3C chain (450 aa).

The MREC motif signature appears at 1–4 (MREC). A GTP-binding site is contributed by Gln-11. At Lys-40 the chain carries N6-acetyllysine. 7 residues coordinate GTP: Glu-71, Ser-140, Gly-144, Thr-145, Thr-179, Asn-206, and Asn-228. Glu-71 contacts Mg(2+). Glu-254 is an active-site residue. Tyr-282 is subject to 3'-nitrotyrosine. Residue Ser-439 is modified to Phosphoserine. The residue at position 450 (Tyr-450) is a 3'-nitrotyrosine.

This sequence belongs to the tubulin family. As to quaternary structure, dimer of alpha and beta chains. A typical microtubule is a hollow water-filled tube with an outer diameter of 25 nm and an inner diameter of 15 nM. Alpha-beta heterodimers associate head-to-tail to form protofilaments running lengthwise along the microtubule wall with the beta-tubulin subunit facing the microtubule plus end conferring a structural polarity. Microtubules usually have 13 protofilaments but different protofilament numbers can be found in some organisms and specialized cells. Requires Mg(2+) as cofactor. In terms of processing, some glutamate residues at the C-terminus are polyglutamylated, resulting in polyglutamate chains on the gamma-carboxyl group. Polyglutamylation plays a key role in microtubule severing by spastin (SPAST). SPAST preferentially recognizes and acts on microtubules decorated with short polyglutamate tails: severing activity by SPAST increases as the number of glutamates per tubulin rises from one to eight, but decreases beyond this glutamylation threshold. Glutamylation is also involved in cilia motility. Some glutamate residues at the C-terminus are monoglycylated but not polyglycylated due to the absence of functional TTLL10 in human. Monoglycylation is mainly limited to tubulin incorporated into cilia and flagella axonemes, which is required for their stability and maintenance. Flagella glycylation controls sperm motility. Both polyglutamylation and monoglycylation can coexist on the same protein on adjacent residues, and lowering glycylation levels increases polyglutamylation, and reciprocally. Post-translationally, acetylation of alpha chains at Lys-40 is located inside the microtubule lumen. This modification has been correlated with increased microtubule stability, intracellular transport and ciliary assembly. In terms of processing, methylation of alpha chains at Lys-40 is found in mitotic microtubules and is required for normal mitosis and cytokinesis contributing to genomic stability. Nitration of Tyr-450 is irreversible and interferes with normal dynein intracellular distribution. Post-translationally, undergoes a tyrosination/detyrosination cycle, the cyclic removal and re-addition of a C-terminal tyrosine residue by the enzymes tubulin tyrosine carboxypeptidase (MATCAP1/KIAA0895L, VASH1 or VASH2) and tubulin tyrosine ligase (TTL), respectively. In terms of processing, tyrosination promotes microtubule interaction with CAP-Gly domain-containing proteins such as CLIP1, CLIP2 and DCTN1. Tyrosination regulates the initiation of dynein-dynactin motility via interaction with DCTN1, which brings the dynein-dynactin complex into contact with microtubules. In neurons, tyrosinated tubulins mediate the initiation of retrograde vesicle transport. Detyrosination is involved in metaphase plate congression by guiding chromosomes during mitosis: detyrosination promotes interaction with CENPE, promoting pole-proximal transport of chromosomes toward the equator. Detyrosination increases microtubules-dependent mechanotransduction in dystrophic cardiac and skeletal muscle. In cardiomyocytes, detyrosinated microtubules are required to resist to contractile compression during contraction: detyrosination promotes association with desmin (DES) at force-generating sarcomeres, leading to buckled microtubules and mechanical resistance to contraction. As to expression, expressed in testis.

It localises to the cytoplasm. The protein resides in the cytoskeleton. It carries out the reaction GTP + H2O = GDP + phosphate + H(+). Tubulin is the major constituent of microtubules, a cylinder consisting of laterally associated linear protofilaments composed of alpha- and beta-tubulin heterodimers. Microtubules grow by the addition of GTP-tubulin dimers to the microtubule end, where a stabilizing cap forms. Below the cap, tubulin dimers are in GDP-bound state, owing to GTPase activity of alpha-tubulin. In Homo sapiens (Human), this protein is Tubulin alpha-3C chain (TUBA3C).